The following is a 45-amino-acid chain: Putative UPF0377 protein YJL222W-B (45 aa).

Belongs to the UPF0377 family.

This is Putative UPF0377 protein YJL222W-B from Saccharomyces cerevisiae (strain ATCC 204508 / S288c) (Baker's yeast).